A 467-amino-acid polypeptide reads, in one-letter code: UDP-N-acetylmuramate--L-alanine ligase (467 aa).

114-120 (GTHGKTT) serves as a coordination point for ATP.

It belongs to the MurCDEF family.

Its subcellular location is the cytoplasm. It catalyses the reaction UDP-N-acetyl-alpha-D-muramate + L-alanine + ATP = UDP-N-acetyl-alpha-D-muramoyl-L-alanine + ADP + phosphate + H(+). The protein operates within cell wall biogenesis; peptidoglycan biosynthesis. Cell wall formation. The polypeptide is UDP-N-acetylmuramate--L-alanine ligase (Bradyrhizobium diazoefficiens (strain JCM 10833 / BCRC 13528 / IAM 13628 / NBRC 14792 / USDA 110)).